The chain runs to 211 residues: Large ribosomal subunit protein uL3 (211 aa).

This sequence belongs to the universal ribosomal protein uL3 family. In terms of assembly, part of the 50S ribosomal subunit. Forms a cluster with proteins L14 and L19.

Functionally, one of the primary rRNA binding proteins, it binds directly near the 3'-end of the 23S rRNA, where it nucleates assembly of the 50S subunit. The chain is Large ribosomal subunit protein uL3 from Geobacter sp. (strain M21).